The following is a 183-amino-acid chain: Capsid protein (183 aa).

The interval 150 to 183 is disordered; that stretch reads RQRGRTIRRRTPSPRRRRSQSPRRRRSQSRESQC. Residues 151 to 176 are compositionally biased toward basic residues; that stretch reads QRGRTIRRRTPSPRRRRSQSPRRRRS. A Bipartite nuclear localization signal motif is present at residues 158-175; it reads RRTPSPRRRRSQSPRRRR. Phosphoserine; by host occurs at positions 162 and 170. Tandem repeats lie at residues 162–169 and 170–177. Residues 162–177 are 2 X 8 AA repeats of S-P-R-R-R-[PR]-S-Q; sequence SPRRRRSQSPRRRRSQ. Residues 177 to 183 form an RNA binding region; sequence QSRESQC.

Belongs to the orthohepadnavirus core antigen family. As to quaternary structure, homodimerizes, then multimerizes. Interacts with cytosol exposed regions of viral L glycoprotein present in the reticulum-to-Golgi compartment. Interacts with human FLNB. Phosphorylated form interacts with host importin alpha; this interaction depends on the exposure of the NLS, which itself depends upon genome maturation and/or phosphorylation of the capsid protein. Interacts with host NUP153. Phosphorylated by host SRPK1, SRPK2, and maybe protein kinase C or GAPDH. Phosphorylation is critical for pregenomic RNA packaging. Protein kinase C phosphorylation is stimulated by HBx protein and may play a role in transport of the viral genome to the nucleus at the late step during the viral replication cycle.

It localises to the virion. Its subcellular location is the host cytoplasm. Functionally, self assembles to form an icosahedral capsid. Most capsids appear to be large particles with an icosahedral symmetry of T=4 and consist of 240 copies of capsid protein, though a fraction forms smaller T=3 particles consisting of 180 capsid proteins. Entering capsids are transported along microtubules to the nucleus. Phosphorylation of the capsid is thought to induce exposure of nuclear localization signal in the C-terminal portion of the capsid protein that allows binding to the nuclear pore complex via the importin (karyopherin-) alpha and beta. Capsids are imported in intact form through the nuclear pore into the nuclear basket, where it probably binds NUP153. Only capsids that contain the mature viral genome can release the viral DNA and capsid protein into the nucleoplasm. Immature capsids get stuck in the basket. Capsids encapsulate the pre-genomic RNA and the P protein. Pre-genomic RNA is reverse-transcribed into DNA while the capsid is still in the cytoplasm. The capsid can then either be directed to the nucleus, providing more genomes for transcription, or bud through the endoplasmic reticulum to provide new virions. The chain is Capsid protein from Homo sapiens (Human).